The sequence spans 566 residues: Berberine bridge enzyme-like D-2 (566 aa).

Residues 1–33 (MKRNISMSLQRLLIILMMISFLFTSLLVPSVSA) form the signal peptide. A disulfide bridge links Cys-42 with Cys-103. N-linked (GlcNAc...) asparagine glycosylation is present at Asn-50. Positions 81-257 (SKPKPTVIIV…YAWKIRLLKV (177 aa)) constitute an FAD-binding PCMH-type domain. Residue His-118 is modified to Pros-8alpha-FAD histidine. N-linked (GlcNAc...) asparagine glycans are attached at residues Asn-364, Asn-378, and Asn-503.

Belongs to the oxygen-dependent FAD-linked oxidoreductase family. FAD serves as cofactor.

Its subcellular location is the vacuole. Its pathway is alkaloid biosynthesis; nicotine biosynthesis. Functionally, involved in the biosynthesis of pyridine alkaloid natural products, leading mainly to the production of anabasine, anatabine, nicotine and nornicotine, effective deterrents against herbivores with antiparasitic and pesticide properties (neurotoxins); nornicotine serves as the precursor in the synthesis of the carcinogen compound N'-nitrosonornicotine (NNN). Catalyzes a late oxidation step subsequent to the pyridine ring condensation reaction in the biosynthesis of alkaloids. This chain is Berberine bridge enzyme-like D-2, found in Nicotiana tabacum (Common tobacco).